Here is a 1034-residue protein sequence, read N- to C-terminus: MGVSLRHLSPSSFWVSRRPRVSSSILSFLVPRRRILCTRKVAIIKGNAGYSTATDCGGSHGFHHSGHQRSSSVEFSGEWKLNLGSKTARMVPPTVKQAGAVSAWREEVNNKLRGRNREYANNQDDAFGNGSYILKGFVPKIDDVHSYGNGQNFDYNLKPGTDITTLGRELNGFMQTNSIRGSVVALPSKDIEVGETTDVTLKPLNSDTTLDNASYKKTATISKVEKCTNLSQVRANLKKIYNRVRVVDNVSSAKETVALLMNQYRNLVHACDTEVSRIDVKTETPVDHGEMICFSIYCGSEADFGDGKSCIWVDVLGENGRDILAEFKPFFEDSSIKKVWHNYSFDNHIIRNYGIKLSGFHGDTMHMARLWDSSRRISGGYSLEALTSDPKVLGGTETKEEAELFGKISMKKIFGKGKLKKDGSEGKLVIIPPVKELQMEDREAWISYSALDSISTLKLYESMKKQLQAKKWFLDGKLISKKNMFDFYQEYWQPFGELLAKMESEGMLVDRDYLAQIEIVAKAEQEIAVSRFRNWASKHCPDAKHMNVGSDTQLRQLFFGGISNSCNDEDLPYEKLFKVPNVDKVIEEGKKRATKFRNIKLHRISDRPLPTEKFTASGWPSVSGDTLKALAGKVSAEYDYMEGVLDTCLEENIGDDDCISLPDEVVETQHVNTSVESDTSAYGTAFDAFGGGESGKEACHAIAALCEVCSIDSLISNFILPLQGSNVSGKDGRVHCSLNINTETGRLSARRPNLQNQPALEKDRYKIRQAFIASPGNSLIVADYGQLELRILAHLASCESMKEAFIAGGDFHSRTAMNMYPHIREAVENGEVLLEWHPQPGQEKPPVPLLKDAFASERRKAKMLNFSIAYGKTAIGLSRDWKVSREEAQDTVNLWYNDRQEVRKWQELRKKEAIQKGYVLTLLGRARKFPEYRSRAQKNHIERAAINTPVQGSAADVAMCAMLEISNNQRLKELGWKLLLQVHDEVILEGPSESAENAKDIVVNCMSEPFNGKNILSVDLSVDAKCAQNWYAGK.

A chloroplast and mitochondrion-targeting transit peptide spans 1–55; that stretch reads MGVSLRHLSPSSFWVSRRPRVSSSILSFLVPRRRILCTRKVAIIKGNAGYSTATD. The 199-residue stretch at 270-468 folds into the 3'-5' exonuclease domain; it reads ACDTEVSRID…LYESMKKQLQ (199 aa). A polymerase region spans residues 700 to 1030; it reads HAIAALCEVC…SVDAKCAQNW (331 aa).

This sequence belongs to the DNA polymerase type-A family. As to expression, expressed in shoot apical meristem.

It is found in the mitochondrion. The protein localises to the plastid. The protein resides in the chloroplast. It catalyses the reaction DNA(n) + a 2'-deoxyribonucleoside 5'-triphosphate = DNA(n+1) + diphosphate. Its activity is regulated as follows. Not inhibited by aphidicolin. In terms of biological role, in addition to polymerase activity, this DNA polymerase exhibits 5'-3' exonuclease activity. Required for DNA replication and accumulation in plastids and mitochondria. This Arabidopsis thaliana (Mouse-ear cress) protein is DNA polymerase I B, chloroplastic/mitochondrial (POLIB).